A 973-amino-acid polypeptide reads, in one-letter code: 109 kDa U5 small nuclear ribonucleoprotein component GFL (973 aa).

The tract at residues 1-40 (MDGSLYGECGNYIGPEIESDRDSDDSVEDEDLQEPGGSNG) is disordered. Acidic residues predominate over residues 17 to 33 (IESDRDSDDSVEDEDLQ). A tr-type G domain is found at 122–408 (ALVRNVALVG…LGVTLSNSAY (287 aa)). The interval 131–138 (GHLQHGKT) is G1. 131–138 (GHLQHGKT) provides a ligand contact to GTP. The tract at residues 175–179 (NISIK) is G2. A G3 region spans residues 201 to 204 (DTPG). GTP is bound by residues 201–205 (DTPGN) and 255–258 (NKVD). The segment at 255–258 (NKVD) is G4. The interval 381–383 (YSQ) is G5.

This sequence belongs to the TRAFAC class translation factor GTPase superfamily. Classic translation factor GTPase family. As to expression, expressed in flower buds, open flowers and siliques. Expressed at low levels in rosettes leaves, cauline leaves and stems.

It is found in the nucleus speckle. In terms of biological role, splicing factor involved in pre-mRNA splicing and component of the spliceosome. The protein is 109 kDa U5 small nuclear ribonucleoprotein component GFL of Arabidopsis thaliana (Mouse-ear cress).